Consider the following 778-residue polypeptide: High affinity nerve growth factor receptor (778 aa).

An N-terminal signal peptide occupies residues 1–14 (WGCLRLPLPLCHAL). Residues 15 to 400 (AAHCRCPASH…VETADEHTFG (386 aa)) lie on the Extracellular side of the membrane. Cysteine 18 and cysteine 20 are disulfide-bonded. LRR repeat units lie at residues 71–92 (DLRHLTISNSGLQYISDDAFQD) and 95–116 (RLSHVNLSFNALTSLSWKTFQH). 11 N-linked (GlcNAc...) asparagine glycosylation sites follow: asparagine 100, asparagine 130, asparagine 143, asparagine 151, asparagine 194, asparagine 234, asparagine 262, asparagine 300, asparagine 320, asparagine 340, and asparagine 384. In terms of domain architecture, LRRCT spans 127-175 (NPFNCSCGIRWLQLWQNGSRAELGNQSLLCWEGSMLVALDSHPLHDCEP). Cysteines 133 and 173 form a disulfide. 2 consecutive Ig-like C2-type domains span residues 175 to 262 (PPTA…VMLN) and 281 to 347 (WCIP…VVQN). Cysteine 282 and cysteine 327 are oxidised to a cystine. A helical transmembrane segment spans residues 401 to 421 (VSVAVALAVFASLFLSVMLIA). Topologically, residues 422–778 (LNKCGHRSKF…TPPIYLDILG (357 aa)) are cytoplasmic. A Phosphotyrosine; by autocatalysis modification is found at tyrosine 479. One can recognise a Protein kinase domain in the interval 493–763 (IVLKWELGEG…RSIQDIHSRL (271 aa)). Residues 499 to 507 (LGEGAFGKV) and lysine 527 each bind ATP. The Proton acceptor role is filled by aspartate 633. A phosphotyrosine; by autocatalysis mark is found at tyrosine 659, tyrosine 663, tyrosine 664, and tyrosine 773.

It belongs to the protein kinase superfamily. Tyr protein kinase family. Insulin receptor subfamily. In terms of assembly, exists in a dynamic equilibrium between monomeric (low affinity) and dimeric (high affinity) structures. Homodimerization is induced by NGF dimer binding. Interacts with PTPRS. In terms of processing, ligand-mediated auto-phosphorylation. Ubiquitinated. Undergoes polyubiquitination upon activation; regulated by NGFR. Ubiquitination regulates the internalization of the receptor.

The protein resides in the cell membrane. It is found in the early endosome membrane. It localises to the late endosome membrane. The protein localises to the recycling endosome membrane. It carries out the reaction L-tyrosyl-[protein] + ATP = O-phospho-L-tyrosyl-[protein] + ADP + H(+). With respect to regulation, the pro-survival signaling effect of NTRK1 in neurons requires its endocytosis into signaling early endosomes and its retrograde axonal transport. Receptor tyrosine kinase involved in the development and the maturation of the central and peripheral nervous systems through regulation of proliferation, differentiation and survival of sympathetic and nervous neurons. High affinity receptor for NGF which is its primary ligand, it can also bind and be activated by NTF3/neurotrophin-3. Upon dimeric NGF ligand-binding, undergoes homodimerization, autophosphorylation and activation. Recruits, phosphorylates and/or activates several downstream effectors that regulate distinct overlapping signaling cascades driving cell survival and differentiation. In absence of ligand and activation, may promote cell death, making the survival of neurons dependent on trophic factors. The chain is High affinity nerve growth factor receptor (NTRK1) from Gallus gallus (Chicken).